The following is a 118-amino-acid chain: Cycloviolacin-O11 (118 aa).

An N-terminal signal peptide occupies residues 1-22; that stretch reads MEMKNMVVGLFLIAAFALPALA. Residues 23–84 constitute a propeptide that is removed on maturation; sequence TSFEKDFITH…THSNSINALG (62 aa). The cyclopeptide (Gly-Asn) cross-link spans 85-115; sequence GTLPCGESCVWIPCISAVVGCSCKSKVCYKN. Cystine bridges form between Cys89-Cys105, Cys93-Cys107, and Cys98-Cys112. A propeptide spanning residues 116-118 is cleaved from the precursor; it reads SLA.

Cycloviolacin-O11 is a cyclic peptide. Expressed in leaves, petals and petioles but not in roots and runners (at protein level).

Its function is as follows. Probably participates in a plant defense mechanism. In Viola odorata (Sweet violet), this protein is Cycloviolacin-O11 (Voc2).